Reading from the N-terminus, the 404-residue chain is 4-hydroxy-3-methylbut-2-en-1-yl diphosphate synthase (ferredoxin) (404 aa).

Positions 313, 316, 347, and 354 each coordinate [4Fe-4S] cluster.

It belongs to the IspG family. Requires [4Fe-4S] cluster as cofactor.

The catalysed reaction is (2E)-4-hydroxy-3-methylbut-2-enyl diphosphate + 2 oxidized [2Fe-2S]-[ferredoxin] + H2O = 2-C-methyl-D-erythritol 2,4-cyclic diphosphate + 2 reduced [2Fe-2S]-[ferredoxin] + H(+). Its pathway is isoprenoid biosynthesis; isopentenyl diphosphate biosynthesis via DXP pathway; isopentenyl diphosphate from 1-deoxy-D-xylulose 5-phosphate: step 5/6. Converts 2C-methyl-D-erythritol 2,4-cyclodiphosphate (ME-2,4cPP) into 1-hydroxy-2-methyl-2-(E)-butenyl 4-diphosphate. This chain is 4-hydroxy-3-methylbut-2-en-1-yl diphosphate synthase (ferredoxin), found in Crocosphaera subtropica (strain ATCC 51142 / BH68) (Cyanothece sp. (strain ATCC 51142)).